We begin with the raw amino-acid sequence, 1405 residues long: Rho guanine nucleotide exchange factor 18 (1405 aa).

3 disordered regions span residues 1 to 47 (MGSE…EDGF), 92 to 115 (ETHRQEARRESSHTSCEGASALPQ), and 289 to 330 (PGKS…PGKR). Composition is skewed to basic and acidic residues over residues 92–103 (ETHRQEARRESS) and 308–330 (RQKEKGKSPAHLKDKTQDLPGKR). The C2H2-type; degenerate zinc-finger motif lies at 347-372 (SSCPLCGEPLLNSASLKEHPRTTLLS). The region spanning 485-682 (KRQDVLYELM…KDIISQVDAK (198 aa)) is the DH domain. One can recognise a PH domain in the interval 723-825 (QLHLEGALCW…WMAHIRRAVE (103 aa)). The tract at residues 936–1016 (QVEEGSVSAG…PQAVEMPSTE (81 aa)) is disordered. Residue Thr-952 is modified to Phosphothreonine. Ser-961 carries the post-translational modification Phosphoserine. The stretch at 1084–1181 (FEKQREERAG…RERLELLRRF (98 aa)) forms a coiled coil. Disordered stretches follow at residues 1198–1242 (EAQP…VERP), 1274–1309 (RQTAVQQQIPTKLAASTKGGKEKGSKSRGSQRWESS), and 1328–1405 (ESAS…VIFF). 2 positions are modified to phosphoserine: Ser-1336 and Ser-1338. Residues 1355 to 1365 (FPAPSPAPAAT) are compositionally biased toward pro residues. Positions 1375 to 1394 (TSLPPVSPASSLPTTPLATT) are enriched in low complexity. The segment covering 1396 to 1405 (EVSKEDVIFF) has biased composition (basic and acidic residues).

Interacts with SEPT9; interaction may inhibit GEF activity. Interacts with Gbetagamma subunits GNB1 and GNG2. Interacts with EPB41L4B. Interacts with PATJ (via C-terminus).

It is found in the cytoplasm. The protein resides in the cytoskeleton. Its subcellular location is the cell membrane. It localises to the apical cell membrane. In terms of biological role, acts as a guanine nucleotide exchange factor (GEF) for RhoA GTPases. May play a role in actin cytoskeleton reorganization in different tissues since its activation induces formation of actin stress fibers. Also acts as a GEF for RAC1, inducing production of reactive oxygen species (ROS). Does not act as a GEF for CDC42. The G protein beta-gamma (Gbetagamma) subunits of heterotrimeric G proteins act as activators, explaining the integrated effects of LPA and other G-protein coupled receptor agonists on actin stress fiber formation, cell shape change and ROS production. Required for EPB41L4B-mediated regulation of the circumferential actomyosin belt in epithelial cells. The sequence is that of Rho guanine nucleotide exchange factor 18 (Arhgef18) from Mus musculus (Mouse).